Consider the following 220-residue polypeptide: Ribosome maturation factor RimM (220 aa).

The PRC barrel domain occupies E143–Y220.

Belongs to the RimM family. As to quaternary structure, binds ribosomal protein uS19.

It is found in the cytoplasm. Its function is as follows. An accessory protein needed during the final step in the assembly of 30S ribosomal subunit, possibly for assembly of the head region. Essential for efficient processing of 16S rRNA. May be needed both before and after RbfA during the maturation of 16S rRNA. It has affinity for free ribosomal 30S subunits but not for 70S ribosomes. The polypeptide is Ribosome maturation factor RimM (Cupriavidus metallidurans (strain ATCC 43123 / DSM 2839 / NBRC 102507 / CH34) (Ralstonia metallidurans)).